We begin with the raw amino-acid sequence, 194 residues long: Peptidyl-tRNA hydrolase (194 aa).

Tyrosine 17 contributes to the tRNA binding site. Histidine 22 functions as the Proton acceptor in the catalytic mechanism. TRNA is bound by residues phenylalanine 68, asparagine 70, and asparagine 116.

It belongs to the PTH family. Monomer.

It is found in the cytoplasm. It catalyses the reaction an N-acyl-L-alpha-aminoacyl-tRNA + H2O = an N-acyl-L-amino acid + a tRNA + H(+). Its function is as follows. Hydrolyzes ribosome-free peptidyl-tRNAs (with 1 or more amino acids incorporated), which drop off the ribosome during protein synthesis, or as a result of ribosome stalling. In terms of biological role, catalyzes the release of premature peptidyl moieties from peptidyl-tRNA molecules trapped in stalled 50S ribosomal subunits, and thus maintains levels of free tRNAs and 50S ribosomes. This is Peptidyl-tRNA hydrolase from Histophilus somni (strain 129Pt) (Haemophilus somnus).